The sequence spans 329 residues: Solute carrier family 35 member B1 (329 aa).

The next 8 helical transmembrane spans lie at 21–41 (AVCF…QETI), 60–80 (TLVF…IQFF), 91–111 (WLYG…NSAL), 142–162 (YPMA…LFLY), 175–195 (VFGF…LTGV), 220–240 (TLVL…LAFT), 250–270 (ILLF…TVVY), and 292–312 (VLLF…LVFL). The Di-lysine motif motif lies at 325 to 329 (KKTTH).

It belongs to the nucleotide-sugar transporter family. SLC35B subfamily.

The protein resides in the endoplasmic reticulum membrane. In terms of biological role, probable sugar transporter. This is Solute carrier family 35 member B1 (slc35b1) from Danio rerio (Zebrafish).